Here is a 469-residue protein sequence, read N- to C-terminus: Phosphoenolpyruvate carboxylase (469 aa).

It belongs to the PEPCase type 2 family. In terms of assembly, homotetramer. Requires Mg(2+) as cofactor.

The enzyme catalyses oxaloacetate + phosphate = phosphoenolpyruvate + hydrogencarbonate. Functionally, catalyzes the irreversible beta-carboxylation of phosphoenolpyruvate (PEP) to form oxaloacetate (OAA), a four-carbon dicarboxylic acid source for the tricarboxylic acid cycle. The chain is Phosphoenolpyruvate carboxylase from Pyrococcus horikoshii (strain ATCC 700860 / DSM 12428 / JCM 9974 / NBRC 100139 / OT-3).